A 572-amino-acid polypeptide reads, in one-letter code: MCSLSFFFLFLFSTLFFILGIYYLMIDYSLFIEWELFSLNSSMVVMTFIIDWMSLVFMSFVMYISSLVIYYSNDYMHNEKNINRFIMIVLMFILSMAFLIISPNLISILLGWDGLGLVSYCLVIYYQNVKSYNAGMLTALSNRIGDVAILISISWMLNFGSWNYIYYYYFISDSFEMKIITLLIILAAMTKSAQIPFSSWLPAAMAAPTPVSALVHSSTLVTAGVYLLIRFNPMLMVYDFGWYILFIGCLTMFMSGLGANFEFDLKKIIALSTLSQLGLMMSILSMGYSDLAFFHLLTHALFKALLFMCAGSMIHNLRDSQDIRFMGSIIHFMPLTSICFNVSSLCLCGMPFLAGFYSKDLILEIVCLSWVNFFIFFLYFFSTGLTASYSFRLFYYSMSGDNNYYSSYSFNDSSYFISFGMIGLLIVAVFGGSLLSWLIFPVPYLVVLPWYLKFLTLLTIILGSYFGYVISDFVYSYELFSLNFLSFVMFTGSMWFMPFLSTNYVSYLPLSFGYYSLKSFDSGWGELLGGQGLYSFFVYLINYIQSLYDSNFKVYLLTFVFWMFILFVLFFL.

Transmembrane regions (helical) follow at residues 6 to 26, 44 to 64, 86 to 106, 107 to 127, 147 to 167, 179 to 201, 208 to 230, 234 to 254, 268 to 288, 291 to 311, 337 to 357, 372 to 394, 422 to 442, 454 to 474, 479 to 499, 524 to 544, and 552 to 572; these read FFFL…YLMI, VVMT…VMYI, IMIV…PNLI, SILL…IYYQ, VAIL…YIYY, IITL…SSWL, PTPV…LLIR, MLMV…TMFM, IIAL…SMGY, LAFF…MCAG, SICF…AGFY, NFFI…FRLF, IGLL…IFPV, FLTL…SDFV, LFSL…FMPF, WGEL…INYI, and FKVY…LFFL.

The protein belongs to the complex I subunit 5 family.

It localises to the mitochondrion inner membrane. The enzyme catalyses a ubiquinone + NADH + 5 H(+)(in) = a ubiquinol + NAD(+) + 4 H(+)(out). Functionally, core subunit of the mitochondrial membrane respiratory chain NADH dehydrogenase (Complex I) that is believed to belong to the minimal assembly required for catalysis. Complex I functions in the transfer of electrons from NADH to the respiratory chain. The immediate electron acceptor for the enzyme is believed to be ubiquinone. This chain is NADH-ubiquinone oxidoreductase chain 5 (ND5), found in Locusta migratoria (Migratory locust).